We begin with the raw amino-acid sequence, 430 residues long: MFIDTAKVFVKSGNGGNGAISFRREKYVPLGGPDGGDGGKGGSIIFQVETGITTLLDFKYKKKFIAESGENGGGSKCYGKDGESLYIKVPMGTIIREAETNKIIADLSHKGQELVLLRGGKGGKGNVKFATATKQAPHYAEPGMPGDELNIVLELKLLADVGLLGFPNVGKSTLLSMTTKAKPKIANYHFTTLKPNLGVVAVDGIDPFVMADIPGIIEGAAEGVGLGIQFLRHIERTRLLIHIVDISGVEGRDPFEDFIKINEELKKYSVKLWDRPQIVVANKSDMLYDEGIFEDFKKKVQEMGFDKVFKMSAATNEGVDAVMKEAARILKDIPVKELEISEDEMYIPEEKRFTYDITVEHNKEEGYDVYIVEGTFVDRLLSAVNVNDADSLRYFHKVLRNKGIFDELREMGVKDGDMVRLNDFEFEYIL.

Residues 1 to 158 (MFIDTAKVFV…LNIVLELKLL (158 aa)) enclose the Obg domain. In terms of domain architecture, OBG-type G spans 159 to 331 (ADVGLLGFPN…VMKEAARILK (173 aa)). GTP contacts are provided by residues 165-172 (GFPNVGKS), 190-194 (FTTLK), 212-215 (DIPG), 282-285 (NKSD), and 312-314 (SAA). Residues S172 and T192 each coordinate Mg(2+). In terms of domain architecture, OCT spans 345–430 (MYIPEEKRFT…LNDFEFEYIL (86 aa)).

The protein belongs to the TRAFAC class OBG-HflX-like GTPase superfamily. OBG GTPase family. As to quaternary structure, monomer. The cofactor is Mg(2+).

It localises to the cytoplasm. Functionally, an essential GTPase which binds GTP, GDP and possibly (p)ppGpp with moderate affinity, with high nucleotide exchange rates and a fairly low GTP hydrolysis rate. Plays a role in control of the cell cycle, stress response, ribosome biogenesis and in those bacteria that undergo differentiation, in morphogenesis control. In Clostridium beijerinckii (strain ATCC 51743 / NCIMB 8052) (Clostridium acetobutylicum), this protein is GTPase Obg.